A 346-amino-acid chain; its full sequence is 4-hydroxy-2-oxovalerate aldolase 2 (346 aa).

Residues 8–258 enclose the Pyruvate carboxyltransferase domain; it reads VTLVDTTLRD…HTGVELFPLI (251 aa). Substrate contacts are provided by residues 16-17, Ser-170, and His-197; that span reads RD. Asp-17 serves as a coordination point for Mn(2+). Residues His-197 and His-199 each coordinate Mn(2+). Tyr-288 lines the substrate pocket.

It belongs to the 4-hydroxy-2-oxovalerate aldolase family.

It carries out the reaction (S)-4-hydroxy-2-oxopentanoate = acetaldehyde + pyruvate. This is 4-hydroxy-2-oxovalerate aldolase 2 from Nocardia farcinica (strain IFM 10152).